Reading from the N-terminus, the 335-residue chain is Serpentine receptor class alpha-13 (335 aa).

Over 1–22 (MAIVSSENRTCADEKLLALYQS) the chain is Extracellular. The chain crosses the membrane as a helical span at residues 23-43 (WSYIASIVFNCLVPTISTYFL). At 44–61 (GRAIFQLCNQATIQYSTR) the chain is on the cytoplasmic side. The chain crosses the membrane as a helical span at residues 62-82 (ILLIATILFAACHQVSYFAFK). The Extracellular portion of the chain corresponds to 83-107 (IDLLHTMFFKLDQPCFLQRSSYDCR). Residues 108–128 (FISIAQTTGVVGMALTGLAMS) form a helical membrane-spanning segment. The Cytoplasmic segment spans residues 129 to 149 (TDRALALTFPADYHKLKSVPR). The chain crosses the membrane as a helical span at residues 150 to 170 (VVLSVFVFIVSFSTWFLLTMN). Residues 171 to 192 (DPLTGYLNHCGFYPSYSVANFQ) are Extracellular-facing. A helical transmembrane segment spans residues 193–213 (LMLDVILYLAIFNLIWDVILF). Over 214–235 (YYARQQILWRRSYQFQKRYEAR) the chain is Cytoplasmic. Residues 236–255 (ISLNCTQAVFVISICQCISN) traverse the membrane as a helical segment. The Extracellular segment spans residues 256 to 278 (GANSGLMRLLMMIGTSITSVTYS). A helical membrane pass occupies residues 279 to 299 (SLLSLFYTAPYSCILLPILMM). Over 300-335 (RISEYIREQRTIGILSLRSEKPGLEEHHQRMRAAWS) the chain is Cytoplasmic.

It belongs to the nematode receptor-like protein sra family.

Its subcellular location is the membrane. Its function is as follows. Chemosensory receptor that negatively regulates RAS/MAPK signaling during vulva induction and the negative regulation of olfaction of volitile attractants. Required for the suppression of vulval induction in response to food starvation. Signaling acts through the GPA-5 G-alpha protein subunit. This chain is Serpentine receptor class alpha-13, found in Caenorhabditis briggsae.